A 261-amino-acid chain; its full sequence is Cytochrome c oxidase subunit 3 (261 aa).

The Mitochondrial matrix segment spans residues 1–15 (MTHQTHAYHMVNPSP). The chain crosses the membrane as a helical span at residues 16-34 (WPLTGALSALLMTSGLVMW). Residues 35-40 (FHYNST) are Mitochondrial intermembrane-facing. Residues 41–66 (LLLTLGLTTNLLTMYQWWRDIIREST) form a helical membrane-spanning segment. Topologically, residues 67–72 (FQGHHT) are mitochondrial matrix. Residues 73–105 (PAVQKGLRYGMILFIISEVFFFSGFFWAFYHSS) traverse the membrane as a helical segment. The Mitochondrial intermembrane portion of the chain corresponds to 106–128 (LAPTPELGGCWPPTGIHPLNPME). A helical transmembrane segment spans residues 129–152 (VPLLNTSVLLASGVSITWAHHSLM). Over 153–155 (EGN) the chain is Mitochondrial matrix. A helical membrane pass occupies residues 156-183 (RKHMLQALFITISLGIYFTLLQASEYYE). Topologically, residues 184 to 190 (APFTISD) are mitochondrial intermembrane. Residues 191–223 (GVYGSTFFVATGFHGLHVIIGSTFLIVCFLRQL) traverse the membrane as a helical segment. At 224–232 (KFHFTSNHH) the chain is on the mitochondrial matrix side. Residues 233–256 (FGFEAAAWYWHFVDVVWLFLYVSI) form a helical membrane-spanning segment. Residues 257–261 (YWWGS) lie on the Mitochondrial intermembrane side of the membrane.

It belongs to the cytochrome c oxidase subunit 3 family. In terms of assembly, component of the cytochrome c oxidase (complex IV, CIV), a multisubunit enzyme composed of 14 subunits. The complex is composed of a catalytic core of 3 subunits MT-CO1, MT-CO2 and MT-CO3, encoded in the mitochondrial DNA, and 11 supernumerary subunits COX4I, COX5A, COX5B, COX6A, COX6B, COX6C, COX7A, COX7B, COX7C, COX8 and NDUFA4, which are encoded in the nuclear genome. The complex exists as a monomer or a dimer and forms supercomplexes (SCs) in the inner mitochondrial membrane with NADH-ubiquinone oxidoreductase (complex I, CI) and ubiquinol-cytochrome c oxidoreductase (cytochrome b-c1 complex, complex III, CIII), resulting in different assemblies (supercomplex SCI(1)III(2)IV(1) and megacomplex MCI(2)III(2)IV(2)).

Its subcellular location is the mitochondrion inner membrane. It carries out the reaction 4 Fe(II)-[cytochrome c] + O2 + 8 H(+)(in) = 4 Fe(III)-[cytochrome c] + 2 H2O + 4 H(+)(out). Its function is as follows. Component of the cytochrome c oxidase, the last enzyme in the mitochondrial electron transport chain which drives oxidative phosphorylation. The respiratory chain contains 3 multisubunit complexes succinate dehydrogenase (complex II, CII), ubiquinol-cytochrome c oxidoreductase (cytochrome b-c1 complex, complex III, CIII) and cytochrome c oxidase (complex IV, CIV), that cooperate to transfer electrons derived from NADH and succinate to molecular oxygen, creating an electrochemical gradient over the inner membrane that drives transmembrane transport and the ATP synthase. Cytochrome c oxidase is the component of the respiratory chain that catalyzes the reduction of oxygen to water. Electrons originating from reduced cytochrome c in the intermembrane space (IMS) are transferred via the dinuclear copper A center (CU(A)) of subunit 2 and heme A of subunit 1 to the active site in subunit 1, a binuclear center (BNC) formed by heme A3 and copper B (CU(B)). The BNC reduces molecular oxygen to 2 water molecules using 4 electrons from cytochrome c in the IMS and 4 protons from the mitochondrial matrix. The protein is Cytochrome c oxidase subunit 3 (MT-CO3) of Rhinoceros unicornis (Greater Indian rhinoceros).